We begin with the raw amino-acid sequence, 194 residues long: Protein LURP-one-related 10 (194 aa).

The protein belongs to the LOR family.

Functionally, might be related to the phospholipid scramblase and tubby-like superfamily of membrane tethered transcription factors. The protein is Protein LURP-one-related 10 of Arabidopsis thaliana (Mouse-ear cress).